Here is a 379-residue protein sequence, read N- to C-terminus: Chaperone protein DnaJ (379 aa).

One can recognise a J domain in the interval 5–70 (DYYEVLGVGK…EKKAAYDQYG (66 aa)). A CR-type zinc finger spans residues 139-217 (GHEAQIRVPH…CHGQGKLKSQ (79 aa)). Positions 152, 155, 169, 172, 191, 194, 205, and 208 each coordinate Zn(2+). CXXCXGXG motif repeat units lie at residues 152–159 (CEHCHGNG), 169–176 (CPTCNGVG), 191–198 (CPKCHGSG), and 205–212 (CTKCHGQG).

It belongs to the DnaJ family. Homodimer. It depends on Zn(2+) as a cofactor.

It localises to the cytoplasm. Participates actively in the response to hyperosmotic and heat shock by preventing the aggregation of stress-denatured proteins and by disaggregating proteins, also in an autonomous, DnaK-independent fashion. Unfolded proteins bind initially to DnaJ; upon interaction with the DnaJ-bound protein, DnaK hydrolyzes its bound ATP, resulting in the formation of a stable complex. GrpE releases ADP from DnaK; ATP binding to DnaK triggers the release of the substrate protein, thus completing the reaction cycle. Several rounds of ATP-dependent interactions between DnaJ, DnaK and GrpE are required for fully efficient folding. Also involved, together with DnaK and GrpE, in the DNA replication of plasmids through activation of initiation proteins. The chain is Chaperone protein DnaJ from Cupriavidus metallidurans (strain ATCC 43123 / DSM 2839 / NBRC 102507 / CH34) (Ralstonia metallidurans).